Here is a 1066-residue protein sequence, read N- to C-terminus: Bifunctional cytochrome P450/NADPH--P450 reductase (1066 aa).

Residues 1–480 (MAESVPIPEP…LAGNGATSSS (480 aa)) are cytochrome P450. Cys407 contacts heme. An NADPH-P-450 reductase region spans residues 481–1066 (THNIKAAANL…NERFATDVFD (586 aa)). Residues 500–641 (MAIFYGSNSG…DFEAWEDIVL (142 aa)) enclose the Flavodoxin-like domain. FMN contacts are provided by residues 506–511 (SNSGTC), 554–557 (SYEG), Cys588, and Thr596. The 229-residue stretch at 676 to 904 (QDVEEALVVA…RASSEAFHLP (229 aa)) folds into the FAD-binding FR-type domain.

The protein in the N-terminal section; belongs to the cytochrome P450 family. FAD is required as a cofactor. Requires FMN as cofactor. The cofactor is heme.

It is found in the membrane. It catalyses the reaction an organic molecule + reduced [NADPH--hemoprotein reductase] + O2 = an alcohol + oxidized [NADPH--hemoprotein reductase] + H2O + H(+). The catalysed reaction is 2 oxidized [cytochrome P450] + NADPH = 2 reduced [cytochrome P450] + NADP(+) + H(+). With respect to regulation, stimulated NADPH--cytochrome reductase activity in the presence of substrate. Inhibited by fatty acid substrates longer than 13 carbons and the degree of inhibition increases with increasing chain length. Its function is as follows. Functions as a fatty acid monooxygenase. Catalyzes hydroxylation of fatty acids at omega-1, omega-2 and omega-3 positions. Shows activity toward fatty acids with a chain length of 9-18 carbons with optimum chain lengths of 12-14 carbons (lauric, tridecylic and myristic acids). Can also use shorter saturated fatty acids with a chain length of 9 or 10 carbons as substrates. Also displays a NADPH-dependent reductase activity in the C-terminal domain, which allows electron transfer from NADPH to the heme iron of the cytochrome P450 N-terminal domain. The chain is Bifunctional cytochrome P450/NADPH--P450 reductase from Fusarium oxysporum (Fusarium vascular wilt).